Reading from the N-terminus, the 340-residue chain is Methionine import ATP-binding protein MetN (340 aa).

One can recognise an ABC transporter domain in the interval 6–245 (IEFEGITKVF…PQTNVAKRFV (240 aa)). 42-49 (GYSGAGKS) lines the ATP pocket.

Belongs to the ABC transporter superfamily. Methionine importer (TC 3.A.1.24) family. The complex is composed of two ATP-binding proteins (MetN), two transmembrane proteins (MetI) and a solute-binding protein (MetQ).

The protein localises to the cell membrane. It carries out the reaction L-methionine(out) + ATP + H2O = L-methionine(in) + ADP + phosphate + H(+). It catalyses the reaction D-methionine(out) + ATP + H2O = D-methionine(in) + ADP + phosphate + H(+). In terms of biological role, part of the ABC transporter complex MetNIQ involved in methionine import. Responsible for energy coupling to the transport system. In Corynebacterium diphtheriae (strain ATCC 700971 / NCTC 13129 / Biotype gravis), this protein is Methionine import ATP-binding protein MetN.